The following is a 244-amino-acid chain: LOB domain-containing protein 17 (244 aa).

The 103-residue stretch at 6 to 108 (SPCGACKFLR…TQLEILKQQA (103 aa)) folds into the LOB domain.

It belongs to the LOB domain-containing protein family. Expressed in roots, stems, leaves and flowers.

The protein is LOB domain-containing protein 17 (LBD17) of Arabidopsis thaliana (Mouse-ear cress).